Reading from the N-terminus, the 691-residue chain is DNA ligase (691 aa).

NAD(+) contacts are provided by residues 41 to 45 (DAEYD), 90 to 91 (SL), and Glu130. The active-site N6-AMP-lysine intermediate is the Lys132. NAD(+) is bound by residues Arg153, Glu190, Lys307, and Lys331. Cys425, Cys428, Cys443, and Cys449 together coordinate Zn(2+). One can recognise a BRCT domain in the interval 610–691 (APQGVLAGKT…MHTLLEGHAR (82 aa)).

This sequence belongs to the NAD-dependent DNA ligase family. LigA subfamily. Requires Mg(2+) as cofactor. Mn(2+) serves as cofactor.

The enzyme catalyses NAD(+) + (deoxyribonucleotide)n-3'-hydroxyl + 5'-phospho-(deoxyribonucleotide)m = (deoxyribonucleotide)n+m + AMP + beta-nicotinamide D-nucleotide.. Functionally, DNA ligase that catalyzes the formation of phosphodiester linkages between 5'-phosphoryl and 3'-hydroxyl groups in double-stranded DNA using NAD as a coenzyme and as the energy source for the reaction. It is essential for DNA replication and repair of damaged DNA. This is DNA ligase from Burkholderia pseudomallei (strain 1710b).